We begin with the raw amino-acid sequence, 376 residues long: Lipoprotein p33 (376 aa).

An N-terminal signal peptide occupies residues Met1–Ser30. Cys31 carries N-palmitoyl cysteine lipidation. Residue Cys31 is the site of S-diacylglycerol cysteine attachment. A disordered region spans residues Ser33–Thr59. Over residues Gly38–Gly51 the composition is skewed to gly residues.

The protein belongs to the p35 lipoprotein family.

The protein resides in the cell membrane. The chain is Lipoprotein p33 from Malacoplasma penetrans (strain HF-2) (Mycoplasma penetrans).